The chain runs to 557 residues: T-complex protein 1 subunit eta (557 aa).

Ala-2 carries the post-translational modification N-acetylalanine. Positions 529–557 (PKSESAQGDAAGAMGRGRGGGRGRGMRRR) are disordered. Positions 547-557 (GGGRGRGMRRR) are enriched in basic residues.

The protein belongs to the TCP-1 chaperonin family. In terms of assembly, heterooligomeric complex of about 850 to 900 kDa that forms two stacked rings, 12 to 16 nm in diameter. Interacts with KNAT1.

The protein localises to the cytoplasm. In terms of biological role, molecular chaperone; assists the folding of proteins upon ATP hydrolysis. Known to play a role, in vitro, in the folding of actin and tubulin. This chain is T-complex protein 1 subunit eta, found in Arabidopsis thaliana (Mouse-ear cress).